The sequence spans 287 residues: Large ribosomal subunit protein uL2 (287 aa).

The disordered stretch occupies residues 216 to 287 (RRPEVRGSVM…SKRGRGGRDA (72 aa)). Over residues 271–287 (QRRRRKSSKRGRGGRDA) the composition is skewed to basic residues.

It belongs to the universal ribosomal protein uL2 family. As to quaternary structure, part of the 50S ribosomal subunit. Forms a bridge to the 30S subunit in the 70S ribosome.

Functionally, one of the primary rRNA binding proteins. Required for association of the 30S and 50S subunits to form the 70S ribosome, for tRNA binding and peptide bond formation. It has been suggested to have peptidyltransferase activity; this is somewhat controversial. Makes several contacts with the 16S rRNA in the 70S ribosome. This chain is Large ribosomal subunit protein uL2, found in Synechococcus sp. (strain ATCC 27144 / PCC 6301 / SAUG 1402/1) (Anacystis nidulans).